The following is a 66-amino-acid chain: Large ribosomal subunit protein bL33c (66 aa).

Belongs to the bacterial ribosomal protein bL33 family.

It is found in the plastid. It localises to the chloroplast. The chain is Large ribosomal subunit protein bL33c from Cicer arietinum (Chickpea).